The primary structure comprises 293 residues: Oxidoreductase clz16 (293 aa).

Belongs to the asaB hydroxylase/desaturase family.

Its pathway is secondary metabolite biosynthesis. In terms of biological role, oxidoreductase; part of the gene cluster that mediates the biosynthesis of squalestatin S1 (SQS1, also known as zaragozic acid A), a heavily oxidized fungal polyketide that offers potent cholesterol lowering activity by targeting squalene synthase (SS). SQS1 is composed of a 2,8-dioxobicyclic[3.2.1]octane-3,4,5-tricarboxyclic acid core that is connected to two lipophilic polyketide arms. These initial steps feature the priming of an unusual benzoic acid starter unit onto the highly reducing polyketide synthase clz14, followed by oxaloacetate extension and product release to generate a tricarboxylic acid containing product. The phenylalanine ammonia lyase (PAL) clz10 and the acyl-CoA ligase clz12 are involved in transforming phenylalanine into benzoyl-CoA. The citrate synthase-like protein clz17 is involved in connecting the C-alpha-carbons of the hexaketide chain and oxaloacetate to afford the tricarboxylic acid unit. The potential hydrolytic enzymes, clz11 and clz13, are in close proximity to pks2 and may participate in product release. On the other side, the tetraketide arm is synthesized by a the squalestatin tetraketide synthase clz2 and enzymatically esterified to the core in the last biosynthetic step, by the acetyltransferase clz6. The biosynthesis of the tetraketide must involve 3 rounds of chain extension. After the first and second rounds methyl-transfer occurs, and in all rounds of extension the ketoreductase and dehydratase are active. The enoyl reductase and C-MeT of clz2 are not active in the final round of extension. The acetyltransferase clz6 appears to have a broad substrate selectivity for its acyl CoA substrate, allowing the in vitro synthesis of novel squalestatins. The biosynthesis of SQS1 requires several oxidative steps likely performed by oxidoreductases clz3, clz15 and clz16. Finally, in support of the identification of the cluster as being responsible for SQS1 production, the cluster contains a gene encoding a putative squalene synthase (SS) clz20, suggesting a likely mechanism for self-resistance. The polypeptide is Oxidoreductase clz16 (Cochliobolus lunatus (Filamentous fungus)).